A 668-amino-acid chain; its full sequence is MNQTIKAKLELLPDSPGCYLHKDKNGTVIYVGKAKNLKNRVRSYFHGSHNTKTELLVSEIEDLEWIVVGSNIESLVLEINLIQRYKPKYNIMLKDDKYYPFLKITNEKYPRLLVVRKVQKDGATYFGPYPDVKAANEVKRLLDRIFPFRKCGLHEKKVCFYFHIHQCLCPVVNHVDPQVFKDMTQEVKEFLTGSDKKIVNELEAKMMVSSDNMEFEQAAEYRDVIKAIGTLRTKQRVMNQDLKDRDVFGYYVDKGWMCVQVFFVRQGKLIQRDVNMFPYYNDAEEDFLTYIGQFYQDNNHMMPREIFIPQDIDKESVEAVVAASQEGNLLTKAQAKEVDAKVFTAKTLKFSDQKDVEQSIVKLDKELSAEKRLSSLLAKTQIVQPSRGEKKQLVNMATKNAQSQLQLKFDVAERDILKTTKAVENLGKILGIPKPVRIESFDNSNIMGTSPVSAMVVFIDGKPSKKDYRKYKIKTVVGADDYASMREVMTRRYSRALKEETALPDLIAMDGGAGQVNITKQVLKELGLSIPVAGMQKNDKHQTSELLFGDPLDVVPLSRQSQEFFLLTRIQDEVHRFAITFHRQLRGKNTFSSKLDGIVGLGPKRKQKLLTTFKNLKAIEEASVQEVAEADIPYEVAERVKTTLSGPIQENENWESLKDNVPLLEGKK.

The GIY-YIG domain maps to 14 to 91; the sequence is DSPGCYLHKD…IQRYKPKYNI (78 aa). Residues 196-231 enclose the UVR domain; that stretch reads KKIVNELEAKMMVSSDNMEFEQAAEYRDVIKAIGTL.

It belongs to the UvrC family. Interacts with UvrB in an incision complex.

The protein resides in the cytoplasm. Its function is as follows. The UvrABC repair system catalyzes the recognition and processing of DNA lesions. UvrC both incises the 5' and 3' sides of the lesion. The N-terminal half is responsible for the 3' incision and the C-terminal half is responsible for the 5' incision. The chain is UvrABC system protein C from Lactococcus lactis subsp. lactis (strain IL1403) (Streptococcus lactis).